The primary structure comprises 201 residues: 3-isopropylmalate dehydratase small subunit (201 aa).

Belongs to the LeuD family. LeuD type 1 subfamily. As to quaternary structure, heterodimer of LeuC and LeuD.

The catalysed reaction is (2R,3S)-3-isopropylmalate = (2S)-2-isopropylmalate. It participates in amino-acid biosynthesis; L-leucine biosynthesis; L-leucine from 3-methyl-2-oxobutanoate: step 2/4. Catalyzes the isomerization between 2-isopropylmalate and 3-isopropylmalate, via the formation of 2-isopropylmaleate. The protein is 3-isopropylmalate dehydratase small subunit of Afipia carboxidovorans (strain ATCC 49405 / DSM 1227 / KCTC 32145 / OM5) (Oligotropha carboxidovorans).